Reading from the N-terminus, the 194-residue chain is 3-isopropylmalate dehydratase small subunit (194 aa).

The protein belongs to the LeuD family. LeuD type 1 subfamily. Heterodimer of LeuC and LeuD.

It catalyses the reaction (2R,3S)-3-isopropylmalate = (2S)-2-isopropylmalate. It functions in the pathway amino-acid biosynthesis; L-leucine biosynthesis; L-leucine from 3-methyl-2-oxobutanoate: step 2/4. Its function is as follows. Catalyzes the isomerization between 2-isopropylmalate and 3-isopropylmalate, via the formation of 2-isopropylmaleate. The polypeptide is 3-isopropylmalate dehydratase small subunit (Limosilactobacillus fermentum (strain NBRC 3956 / LMG 18251) (Lactobacillus fermentum)).